The sequence spans 139 residues: Ribulose bisphosphate carboxylase small subunit, plasmid (139 aa).

The protein belongs to the RuBisCO small chain family. Heterohexadecamer of 8 large and 8 small subunits.

Functionally, ruBisCO catalyzes two reactions: the carboxylation of D-ribulose 1,5-bisphosphate, the primary event in carbon dioxide fixation, as well as the oxidative fragmentation of the pentose substrate. Both reactions occur simultaneously and in competition at the same active site. Although the small subunit is not catalytic it is essential for maximal activity. The polypeptide is Ribulose bisphosphate carboxylase small subunit, plasmid (Cupriavidus necator (strain ATCC 17699 / DSM 428 / KCTC 22496 / NCIMB 10442 / H16 / Stanier 337) (Ralstonia eutropha)).